We begin with the raw amino-acid sequence, 176 residues long: MKFLFDLFPIILFFVAFKVWGIFTATAVAIVATLAQVAWVAFRHRKVDTMLWVSLGVIVVFGGATLVLHDEKFIQWKPTVLYWLFAIGLLAARYAFSKNLIEKMMGKQLTLPSPVWDKLNLAWALFFAVLGVANLYVVHNFTESQWVNFKLFGTTGAMVVFIILQSLWLTKYLKDE.

Helical transmembrane passes span 3–23 (FLFD…WGIF), 24–44 (TATA…AFRH), 49–69 (TMLW…LVLH), 72–92 (KFIQ…LLAA), 121–141 (LAWA…VHNF), and 149–169 (FKLF…SLWL).

This sequence belongs to the YciB family.

It is found in the cell inner membrane. Functionally, plays a role in cell envelope biogenesis, maintenance of cell envelope integrity and membrane homeostasis. This Burkholderia cenocepacia (strain ATCC BAA-245 / DSM 16553 / LMG 16656 / NCTC 13227 / J2315 / CF5610) (Burkholderia cepacia (strain J2315)) protein is Inner membrane-spanning protein YciB.